The following is a 93-amino-acid chain: Mitochondrial import inner membrane translocase subunit TIM9 (93 aa).

A Twin CX3C motif motif is present at residues 43–67 (CFVDCVDSFTRKSLQKQEETCVMRC). Cystine bridges form between cysteine 43-cysteine 67 and cysteine 47-cysteine 63.

It belongs to the small Tim family. In terms of assembly, heterohexamer; composed of 3 copies of TIM9 and 3 copies of TIM10, named soluble 70 kDa complex. The complex associates with the TIM22 component of the TIM22 complex. Interacts with multi-pass transmembrane proteins in transit. As to expression, expressed in roots, flowers, young cotyledons and leaves.

It localises to the mitochondrion intermembrane space. Mitochondrial intermembrane chaperone that participates in the import and insertion of multi-pass transmembrane proteins into the mitochondrial inner membrane. May also be required for the transfer of beta-barrel precursors from the TOM complex to the sorting and assembly machinery (SAM complex) of the outer membrane. Acts as a chaperone-like protein that protects the hydrophobic precursors from aggregation and guide them through the mitochondrial intermembrane space. The sequence is that of Mitochondrial import inner membrane translocase subunit TIM9 (TIM9) from Arabidopsis thaliana (Mouse-ear cress).